A 290-amino-acid polypeptide reads, in one-letter code: Light-independent protochlorophyllide reductase iron-sulfur ATP-binding protein (290 aa).

ATP-binding positions include 34-39 (GIGKST) and Lys-63. Mg(2+) is bound at residue Ser-38. Residues Cys-119 and Cys-153 each coordinate [4Fe-4S] cluster. ATP is bound by residues 204–205 (NR) and 228–230 (PDL).

It belongs to the NifH/BchL/ChlL family. As to quaternary structure, homodimer. Protochlorophyllide reductase is composed of three subunits; BchL, BchN and BchB. Requires [4Fe-4S] cluster as cofactor.

It catalyses the reaction chlorophyllide a + oxidized 2[4Fe-4S]-[ferredoxin] + 2 ADP + 2 phosphate = protochlorophyllide a + reduced 2[4Fe-4S]-[ferredoxin] + 2 ATP + 2 H2O. It functions in the pathway porphyrin-containing compound metabolism; bacteriochlorophyll biosynthesis (light-independent). Component of the dark-operative protochlorophyllide reductase (DPOR) that uses Mg-ATP and reduced ferredoxin to reduce ring D of protochlorophyllide (Pchlide) to form chlorophyllide a (Chlide). This reaction is light-independent. The L component serves as a unique electron donor to the NB-component of the complex, and binds Mg-ATP. The sequence is that of Light-independent protochlorophyllide reductase iron-sulfur ATP-binding protein from Rhodospirillum rubrum.